The following is a 352-amino-acid chain: tRNA-specific 2-thiouridylase MnmA (352 aa).

ATP-binding positions include 7–14 (GLSGGVDS) and Leu-33. Cys-94 functions as the Nucleophile in the catalytic mechanism. The cysteines at positions 94 and 193 are disulfide-linked. Gly-119 lines the ATP pocket. Positions 143-145 (KDQ) are interaction with tRNA. Catalysis depends on Cys-193, which acts as the Cysteine persulfide intermediate. The tract at residues 298–299 (RY) is interaction with tRNA.

This sequence belongs to the MnmA/TRMU family.

It is found in the cytoplasm. The catalysed reaction is S-sulfanyl-L-cysteinyl-[protein] + uridine(34) in tRNA + AH2 + ATP = 2-thiouridine(34) in tRNA + L-cysteinyl-[protein] + A + AMP + diphosphate + H(+). Functionally, catalyzes the 2-thiolation of uridine at the wobble position (U34) of tRNA, leading to the formation of s(2)U34. This is tRNA-specific 2-thiouridylase MnmA from Trichormus variabilis (strain ATCC 29413 / PCC 7937) (Anabaena variabilis).